A 113-amino-acid polypeptide reads, in one-letter code: MAKEQKMQSSPQALKAGHLPAVKAGGMRVSKKQGNEENSAPEKNAKKTLQEKPSSVLNMTKMQAMNILAGELEKLSHDFPGEAAQIAHQKPRPTVEKTILPKRLYIIQQPRRC.

The tract at residues 1–57 (MAKEQKMQSSPQALKAGHLPAVKAGGMRVSKKQGNEENSAPEKNAKKTLQEKPSSVL) is disordered.

The protein belongs to the DAP-DAPL1 family. In terms of assembly, associates with ribosomes; preventing translation. Interacts with eiF5a (eif5a and eif5a2); preventing translation.

In terms of biological role, ribosome-binding protein that promotes ribosome hibernation, a process during which ribosomes are stabilized in an inactive state and preserved from proteasomal degradation. Acts via its association with eiF5a (eif5a and eif5a2) at the polypeptide exit tunnel of the ribosome, preventing mRNA translation. Plays a key role in ribosome hibernation in the mature egg by preventing mRNA translation, leading to ribosome inactivation. Ribosomes, which are produced in large quantities during oogenesis, are stored and translationally repressed in the egg and early embryo. This is Death-associated protein-like 1.L (dapl1.L) from Xenopus laevis (African clawed frog).